The following is a 130-amino-acid chain: Ribosome biogenesis inhibitor MINAS-60 (130 aa).

The segment at 61-130 (SRVRRIPTRP…RRRRPVTSSC (70 aa)) is disordered. A compositionally biased stretch (basic residues) spans 109-130 (KGRRRRRRRMRRRRRRPVTSSC).

Interacts with 60S ribosome assembly factors GTPBP4 and MRTO4.

Its subcellular location is the nucleus. It localises to the nucleolus. Functionally, acts as a late-stage inhibitor of pre-60S ribosome assembly by preventing pre-60S ribosome export from nucleus. This chain is Ribosome biogenesis inhibitor MINAS-60, found in Homo sapiens (Human).